We begin with the raw amino-acid sequence, 662 residues long: Transketolase (662 aa).

Histidine 28 lines the substrate pocket. Thiamine diphosphate is bound by residues histidine 68 and 115–117 (GPL). Aspartate 156 provides a ligand contact to Mg(2+). 2 residues coordinate thiamine diphosphate: glycine 157 and asparagine 186. Mg(2+) is bound by residues asparagine 186 and isoleucine 188. Positions 261, 356, and 383 each coordinate substrate. Histidine 261 is a thiamine diphosphate binding site. Glutamate 410 functions as the Proton donor in the catalytic mechanism. Phenylalanine 436 contacts thiamine diphosphate. The substrate site is built by histidine 460, aspartate 468, and arginine 519.

Belongs to the transketolase family. In terms of assembly, homodimer. The cofactor is Mg(2+). Ca(2+) is required as a cofactor. Mn(2+) serves as cofactor. Requires Co(2+) as cofactor. It depends on thiamine diphosphate as a cofactor.

The enzyme catalyses D-sedoheptulose 7-phosphate + D-glyceraldehyde 3-phosphate = aldehydo-D-ribose 5-phosphate + D-xylulose 5-phosphate. Its pathway is carbohydrate biosynthesis; Calvin cycle. It functions in the pathway carbohydrate degradation; pentose phosphate pathway. In terms of biological role, catalyzes the transfer of a two-carbon ketol group from a ketose donor to an aldose acceptor, via a covalent intermediate with the cofactor thiamine pyrophosphate. The sequence is that of Transketolase (tkt) from Staphylococcus epidermidis (strain ATCC 12228 / FDA PCI 1200).